Consider the following 372-residue polypeptide: NAD(P)H-quinone oxidoreductase subunit 1 (372 aa).

The next 8 membrane-spanning stretches (helical) occupy residues 29–49 (WIPFPSFLMIIGATVGVLVVV), 97–117 (WLFTLGPVLVVLPVFVSYLIV), 130–150 (VGIFFWIALSSIAPIGLLMAG), 176–196 (LALSVLAIVMMSNSLSTIDIV), 204–224 (ILGWNIWRQPVGFFIFWIAAL), 254–274 (FALFYLGSYVNLVLSALVFAI), 308–328 (SLGITMTVLKAYFLVFIAVLM), and 347–367 (FLLPVSLVNLLLTAALKLAFP).

It belongs to the complex I subunit 1 family. In terms of assembly, NDH-1 is composed of at least 11 different subunits.

It localises to the cellular thylakoid membrane. The catalysed reaction is a plastoquinone + NADH + (n+1) H(+)(in) = a plastoquinol + NAD(+) + n H(+)(out). The enzyme catalyses a plastoquinone + NADPH + (n+1) H(+)(in) = a plastoquinol + NADP(+) + n H(+)(out). NDH-1 shuttles electrons from an unknown electron donor, via FMN and iron-sulfur (Fe-S) centers, to quinones in the respiratory and/or the photosynthetic chain. The immediate electron acceptor for the enzyme in this species is believed to be plastoquinone. Couples the redox reaction to proton translocation, and thus conserves the redox energy in a proton gradient. The chain is NAD(P)H-quinone oxidoreductase subunit 1 from Crocosphaera subtropica (strain ATCC 51142 / BH68) (Cyanothece sp. (strain ATCC 51142)).